Consider the following 552-residue polypeptide: ATP synthase subunit alpha (552 aa).

Residue 173-180 (GDRQTGKS) participates in ATP binding. Residues 509 to 552 (KPQFSGGSKGSNVPKDVDAGATDADDISQEKITTRKGGATAARG) form a disordered region.

This sequence belongs to the ATPase alpha/beta chains family. F-type ATPases have 2 components, CF(1) - the catalytic core - and CF(0) - the membrane proton channel. CF(1) has five subunits: alpha(3), beta(3), gamma(1), delta(1), epsilon(1). CF(0) has three main subunits: a(1), b(2) and c(9-12). The alpha and beta chains form an alternating ring which encloses part of the gamma chain. CF(1) is attached to CF(0) by a central stalk formed by the gamma and epsilon chains, while a peripheral stalk is formed by the delta and b chains.

It localises to the cell membrane. The catalysed reaction is ATP + H2O + 4 H(+)(in) = ADP + phosphate + 5 H(+)(out). In terms of biological role, produces ATP from ADP in the presence of a proton gradient across the membrane. The alpha chain is a regulatory subunit. This Kineococcus radiotolerans (strain ATCC BAA-149 / DSM 14245 / SRS30216) protein is ATP synthase subunit alpha.